We begin with the raw amino-acid sequence, 164 residues long: MERFLENAMYASRWLLAPVYFGLSLALVALALKFFQEIIHVLPNIFSMAESDLILVLLSLVDMTLVGGLLVMVMFSGYENFVSQLDISENKEKLNWLGKMDATSLKNKVAASIVAISSIHLLRVFMDAKNVPDNKLMWYVIIHLTFVLSAFVMGYLDRLTRHNH.

3 helical membrane-spanning segments follow: residues 15–35 (LLAP…LKFF), 53–73 (LILV…LVMV), and 136–156 (LMWY…MGYL).

This sequence belongs to the UPF0114 family.

Its subcellular location is the cell membrane. In Escherichia coli O139:H28 (strain E24377A / ETEC), this protein is UPF0114 protein YqhA.